Reading from the N-terminus, the 447-residue chain is Tubulin beta chain (447 aa).

GTP contacts are provided by Q11, E69, S138, G142, T143, G144, N204, and N226. Mg(2+) is bound at residue E69. Residues 424-447 are disordered; that stretch reads QYQEASVSEGEEEYDEEAPLEGEE. A compositionally biased stretch (acidic residues) spans 432–447; the sequence is EGEEEYDEEAPLEGEE.

The protein belongs to the tubulin family. Dimer of alpha and beta chains. A typical microtubule is a hollow water-filled tube with an outer diameter of 25 nm and an inner diameter of 15 nM. Alpha-beta heterodimers associate head-to-tail to form protofilaments running lengthwise along the microtubule wall with the beta-tubulin subunit facing the microtubule plus end conferring a structural polarity. Microtubules usually have 13 protofilaments but different protofilament numbers can be found in some organisms and specialized cells. Mg(2+) serves as cofactor.

The protein resides in the cytoplasm. Its subcellular location is the cytoskeleton. Tubulin is the major constituent of microtubules, a cylinder consisting of laterally associated linear protofilaments composed of alpha- and beta-tubulin heterodimers. Microtubules grow by the addition of GTP-tubulin dimers to the microtubule end, where a stabilizing cap forms. Below the cap, tubulin dimers are in GDP-bound state, owing to GTPase activity of alpha-tubulin. The polypeptide is Tubulin beta chain (TUB1) (Dothistroma septosporum (Red band needle blight fungus)).